We begin with the raw amino-acid sequence, 327 residues long: DNA-directed RNA polymerase subunit alpha (327 aa).

An alpha N-terminal domain (alpha-NTD) region spans residues 1 to 233 (MQNVLKSFLT…HQLAAFVDLK (233 aa)). Residues 247–327 (VNPLLLRPVE…GWPPADLTDQ (81 aa)) form an alpha C-terminal domain (alpha-CTD) region.

The protein belongs to the RNA polymerase alpha chain family. As to quaternary structure, homodimer. The RNAP catalytic core consists of 2 alpha, 1 beta, 1 beta' and 1 omega subunit. When a sigma factor is associated with the core the holoenzyme is formed, which can initiate transcription.

The enzyme catalyses RNA(n) + a ribonucleoside 5'-triphosphate = RNA(n+1) + diphosphate. Functionally, DNA-dependent RNA polymerase catalyzes the transcription of DNA into RNA using the four ribonucleoside triphosphates as substrates. The protein is DNA-directed RNA polymerase subunit alpha of Coxiella burnetii (strain CbuK_Q154) (Coxiella burnetii (strain Q154)).